The sequence spans 204 residues: GTP cyclohydrolase 1 (204 aa).

C92, H95, and C165 together coordinate Zn(2+).

The protein belongs to the GTP cyclohydrolase I family. In terms of assembly, homomer.

It catalyses the reaction GTP + H2O = 7,8-dihydroneopterin 3'-triphosphate + formate + H(+). It functions in the pathway cofactor biosynthesis; 7,8-dihydroneopterin triphosphate biosynthesis; 7,8-dihydroneopterin triphosphate from GTP: step 1/1. The polypeptide is GTP cyclohydrolase 1 (Mycobacteroides abscessus (strain ATCC 19977 / DSM 44196 / CCUG 20993 / CIP 104536 / JCM 13569 / NCTC 13031 / TMC 1543 / L948) (Mycobacterium abscessus)).